The primary structure comprises 521 residues: GMP synthase [glutamine-hydrolyzing] (521 aa).

One can recognise a Glutamine amidotransferase type-1 domain in the interval 8-203; it reads KILILDFGAQ…VVDICGCQTL (196 aa). Catalysis depends on Cys85, which acts as the Nucleophile. Active-site residues include His177 and Glu179. The GMPS ATP-PPase domain occupies 204–396; sequence WTAANIIDDQ…LGLPRTMVYR (193 aa). 231–237 lines the ATP pocket; sequence SGGVDSS.

In terms of assembly, homodimer.

The catalysed reaction is XMP + L-glutamine + ATP + H2O = GMP + L-glutamate + AMP + diphosphate + 2 H(+). It functions in the pathway purine metabolism; GMP biosynthesis; GMP from XMP (L-Gln route): step 1/1. Catalyzes the synthesis of GMP from XMP. The protein is GMP synthase [glutamine-hydrolyzing] of Xanthomonas oryzae pv. oryzae (strain MAFF 311018).